A 142-amino-acid chain; its full sequence is Large ribosomal subunit protein uL13c (142 aa).

Belongs to the universal ribosomal protein uL13 family. In terms of assembly, part of the 50S ribosomal subunit.

The protein localises to the plastid. It localises to the chloroplast. This Pyropia yezoensis (Susabi-nori) protein is Large ribosomal subunit protein uL13c.